The following is a 445-amino-acid chain: Phosphoglucosamine mutase (445 aa).

Serine 102 functions as the Phosphoserine intermediate in the catalytic mechanism. Residues serine 102, aspartate 241, aspartate 243, and aspartate 245 each coordinate Mg(2+). Serine 102 is subject to Phosphoserine.

This sequence belongs to the phosphohexose mutase family. Mg(2+) is required as a cofactor. Activated by phosphorylation.

The catalysed reaction is alpha-D-glucosamine 1-phosphate = D-glucosamine 6-phosphate. Its function is as follows. Catalyzes the conversion of glucosamine-6-phosphate to glucosamine-1-phosphate. This is Phosphoglucosamine mutase from Shewanella baltica (strain OS155 / ATCC BAA-1091).